Consider the following 175-residue polypeptide: Transcription factor E (175 aa).

The HTH TFE/IIEalpha-type domain maps to 8-90 (NDPVIQKYLH…LWTFQYENIP (83 aa)).

Belongs to the TFE family. As to quaternary structure, monomer. Interaction with RNA polymerase subunits RpoF and RpoE is necessary for Tfe stimulatory transcription activity. Able to interact with Tbp and RNA polymerase in the absence of DNA promoter. Interacts both with the preinitiation and elongation complexes.

Transcription factor that plays a role in the activation of archaeal genes transcribed by RNA polymerase. Facilitates transcription initiation by enhancing TATA-box recognition by TATA-box-binding protein (Tbp), and transcription factor B (Tfb) and RNA polymerase recruitment. Not absolutely required for transcription in vitro, but particularly important in cases where Tbp or Tfb function is not optimal. It dynamically alters the nucleic acid-binding properties of RNA polymerases by stabilizing the initiation complex and destabilizing elongation complexes. Seems to translocate with the RNA polymerase following initiation and acts by binding to the non template strand of the transcription bubble in elongation complexes. The sequence is that of Transcription factor E from Natronomonas pharaonis (strain ATCC 35678 / DSM 2160 / CIP 103997 / JCM 8858 / NBRC 14720 / NCIMB 2260 / Gabara) (Halobacterium pharaonis).